Consider the following 415-residue polypeptide: Serine--tRNA ligase (415 aa).

Position 231-233 (231-233) interacts with L-serine; it reads TAE. Residue 262–264 coordinates ATP; sequence RSE. E285 contributes to the L-serine binding site. 349–352 provides a ligand contact to ATP; sequence EISS. S383 is a binding site for L-serine.

It belongs to the class-II aminoacyl-tRNA synthetase family. Type-1 seryl-tRNA synthetase subfamily. In terms of assembly, homodimer. The tRNA molecule binds across the dimer.

The protein localises to the cytoplasm. The enzyme catalyses tRNA(Ser) + L-serine + ATP = L-seryl-tRNA(Ser) + AMP + diphosphate + H(+). The catalysed reaction is tRNA(Sec) + L-serine + ATP = L-seryl-tRNA(Sec) + AMP + diphosphate + H(+). It functions in the pathway aminoacyl-tRNA biosynthesis; selenocysteinyl-tRNA(Sec) biosynthesis; L-seryl-tRNA(Sec) from L-serine and tRNA(Sec): step 1/1. Catalyzes the attachment of serine to tRNA(Ser). Is also able to aminoacylate tRNA(Sec) with serine, to form the misacylated tRNA L-seryl-tRNA(Sec), which will be further converted into selenocysteinyl-tRNA(Sec). This is Serine--tRNA ligase from Helicobacter pylori (strain ATCC 700392 / 26695) (Campylobacter pylori).